A 612-amino-acid polypeptide reads, in one-letter code: UvrABC system protein C (612 aa).

The GIY-YIG domain maps to 20-98 (THSGVYRMLD…IKQHRPKYNI (79 aa)). The region spanning 208–243 (SSVLEEISAKMYQASEDMEYEKAQVYRDQLVVLRKL) is the UVR domain.

The protein belongs to the UvrC family. As to quaternary structure, interacts with UvrB in an incision complex.

It is found in the cytoplasm. The UvrABC repair system catalyzes the recognition and processing of DNA lesions. UvrC both incises the 5' and 3' sides of the lesion. The N-terminal half is responsible for the 3' incision and the C-terminal half is responsible for the 5' incision. This Francisella tularensis subsp. holarctica (strain FTNF002-00 / FTA) protein is UvrABC system protein C.